Reading from the N-terminus, the 239-residue chain is Large ribosomal subunit protein bL25 (239 aa).

The segment at 211–239 is disordered; the sequence is KGKKDKEDEEAEKGTSVASPTTATGGTKK. Positions 226–239 are enriched in polar residues; it reads SVASPTTATGGTKK.

Belongs to the bacterial ribosomal protein bL25 family. CTC subfamily. Part of the 50S ribosomal subunit; part of the 5S rRNA/L5/L18/L25 subcomplex. Contacts the 5S rRNA. Binds to the 5S rRNA independently of L5 and L18.

Functionally, this is one of the proteins that binds to the 5S RNA in the ribosome where it forms part of the central protuberance. The sequence is that of Large ribosomal subunit protein bL25 from Endomicrobium trichonymphae.